The primary structure comprises 624 residues: Heat shock factor protein 5 (624 aa).

The DNA-binding element occupies 11 to 228 (NPNNFPAKLW…FHRSFRRDNL (218 aa)). 5 disordered regions span residues 52 to 77 (LSPPGPGAGGAGGAGSSGGGGGSGVG), 112 to 138 (GAAGPGPGPGAGGPAGDGPLHHFHSPH), 186 to 214 (SASASTSPLQHQDPPPQPAGPRPEQHGPV), 429 to 461 (CPSSQANRGQHILPNANSSNPSSTSQASQLEPL), and 572 to 605 (GPANKSTKDTGLSTPARYRERRSNSQGKSPDLHL). Composition is skewed to gly residues over residues 58-77 (GAGGAGGAGSSGGGGGSGVG) and 112-127 (GAAGPGPGPGAGGPAG). Low complexity-rich tracts occupy residues 186–197 (SASASTSPLQHQ) and 442–457 (PNANSSNPSSTSQASQ). Serine 600 bears the Phosphoserine mark.

The protein belongs to the HSF family. As to quaternary structure, homooligomer. Highly expressed in testis particularly in spermatocytes (at protein level). Not expressed in fetal testis and ovary.

Its subcellular location is the nucleus. The protein localises to the chromosome. DNA-binding transcription factor that is essential for male fertility, spermatogenesis and meiotic prophase progression in spermatocytes under non-stress conditions. Positvely and negatively regulates gene expression to ensure progression of meiotic prophase beyond pachytene stage in spermatocytes. Plays a role in male germline meiotic sex chromosome remodeling and silencing through regulation of SMARCA4. This chain is Heat shock factor protein 5 (Hsf5), found in Mus musculus (Mouse).